The following is a 305-amino-acid chain: Thymidylate synthase (305 aa).

DUMP contacts are provided by residues R26 and 160-161 (RR). C180 functions as the Nucleophile in the catalytic mechanism. DUMP-binding positions include 207–210 (RSCD), N218, and 248–250 (HLY). D210 contacts (6R)-5,10-methylene-5,6,7,8-tetrahydrofolate. A304 provides a ligand contact to (6R)-5,10-methylene-5,6,7,8-tetrahydrofolate.

Belongs to the thymidylate synthase family. Bacterial-type ThyA subfamily. As to quaternary structure, homodimer.

The protein resides in the cytoplasm. The enzyme catalyses dUMP + (6R)-5,10-methylene-5,6,7,8-tetrahydrofolate = 7,8-dihydrofolate + dTMP. The protein operates within pyrimidine metabolism; dTTP biosynthesis. Functionally, catalyzes the reductive methylation of 2'-deoxyuridine-5'-monophosphate (dUMP) to 2'-deoxythymidine-5'-monophosphate (dTMP) while utilizing 5,10-methylenetetrahydrofolate (mTHF) as the methyl donor and reductant in the reaction, yielding dihydrofolate (DHF) as a by-product. This enzymatic reaction provides an intracellular de novo source of dTMP, an essential precursor for DNA biosynthesis. The sequence is that of Thymidylate synthase from Sinorhizobium fredii (strain NBRC 101917 / NGR234).